The sequence spans 274 residues: Proteasome subunit beta type-5-A (274 aa).

Residues 1–57 (MKLDTSGFETSMPMIGFGSSSDMLDELSSVPSFDLPRTKEFDGFQKKAKDMLKHAKG) constitute a propeptide, removed in mature form. The active-site Nucleophile is Thr-58.

This sequence belongs to the peptidase T1B family. Component of the 20S core complex of the 26S proteasome. The 26S proteasome is composed of a core protease (CP), known as the 20S proteasome, capped at one or both ends by the 19S regulatory particle (RP/PA700). The 20S proteasome core is composed of 28 subunits that are arranged in four stacked rings, resulting in a barrel-shaped structure. The two end rings are each formed by seven alpha subunits, and the two central rings are each formed by seven beta subunits. The catalytic chamber with the active sites is on the inside of the barrel. In terms of tissue distribution, ubiquitous low levels, higher expression in siliques and flowers.

The protein localises to the cytoplasm. Its subcellular location is the nucleus. The catalysed reaction is Cleavage of peptide bonds with very broad specificity.. Functionally, the proteasome is a multicatalytic proteinase complex which is characterized by its ability to cleave peptides with Arg, Phe, Tyr, Leu, and Glu adjacent to the leaving group at neutral or slightly basic pH. The proteasome has an ATP-dependent proteolytic activity. The chain is Proteasome subunit beta type-5-A (PBE1) from Arabidopsis thaliana (Mouse-ear cress).